Consider the following 521-residue polypeptide: Cholesterol side-chain cleavage enzyme, mitochondrial (521 aa).

The transit peptide at Met-1 to Gly-39 directs the protein to the mitochondrion. Heme is bound at residue Cys-462.

Belongs to the cytochrome P450 family. Interacts with FDX1/adrenodoxin. It depends on heme as a cofactor.

The protein resides in the mitochondrion inner membrane. It carries out the reaction 6 reduced [adrenodoxin] + cholesterol + 3 O2 + 6 H(+) = 4-methylpentanal + pregnenolone + 6 oxidized [adrenodoxin] + 4 H2O. The enzyme catalyses 2 reduced [adrenodoxin] + cholesterol + O2 + 2 H(+) = (22R)-hydroxycholesterol + 2 oxidized [adrenodoxin] + H2O. It catalyses the reaction (22R)-hydroxycholesterol + 2 reduced [adrenodoxin] + O2 + 2 H(+) = (20R,22R)-20,22-dihydroxycholesterol + 2 oxidized [adrenodoxin] + H2O. The catalysed reaction is (20R,22R)-20,22-dihydroxycholesterol + 2 reduced [adrenodoxin] + O2 + 2 H(+) = 4-methylpentanal + pregnenolone + 2 oxidized [adrenodoxin] + 2 H2O. Its pathway is lipid metabolism; C21-steroid hormone metabolism. It participates in steroid metabolism; cholesterol metabolism. Its function is as follows. A cytochrome P450 monooxygenase that catalyzes the side-chain hydroxylation and cleavage of cholesterol to pregnenolone, the precursor of most steroid hormones. Catalyzes three sequential oxidation reactions of cholesterol, namely the hydroxylation at C22 followed with the hydroxylation at C20 to yield 20R,22R-hydroxycholesterol that is further cleaved between C20 and C22 to yield the C21-steroid pregnenolone and 4-methylpentanal. Mechanistically, uses molecular oxygen inserting one oxygen atom into a substrate and reducing the second into a water molecule. Two electrons are provided by NADPH via a two-protein mitochondrial transfer system comprising flavoprotein FDXR (adrenodoxin/ferredoxin reductase) and nonheme iron-sulfur protein FDX1 or FDX2 (adrenodoxin/ferredoxin). This chain is Cholesterol side-chain cleavage enzyme, mitochondrial, found in Homo sapiens (Human).